The sequence spans 492 residues: 5-taurinomethyluridine-[tRNA] synthase subunit GTPB3, mitochondrial (492 aa).

The transit peptide at 1–20 directs the protein to the mitochondrion; that stretch reads MWRGLWTLAAQAARGPRRLC. Residues arginine 52, glutamate 112, and lysine 152 each coordinate 5,10-methylenetetrahydrofolate. Residues 249 to 416 enclose the TrmE-type G domain; sequence GVHVVVTGPP…LLEALRKELA (168 aa). GTP-binding positions include 256 to 263, 282 to 286, 303 to 306, 374 to 377, and 397 to 399; these read GPPNAGKS, GTTRD, DTAG, NKSD, and SCL. Asparagine 259 contacts K(+). The Mg(2+) site is built by serine 263 and threonine 284. Lysine 492 contributes to the 5,10-methylenetetrahydrofolate binding site.

The protein belongs to the TRAFAC class TrmE-Era-EngA-EngB-Septin-like GTPase superfamily. TrmE GTPase family. Homodimer; forms a dimer in the presence of potassium. Interacts with MTO1; forms the GTPBP3-MTO1 complex composed of homodimers of GTPBP3 and MTO1. As to quaternary structure, homodimer, forms homodimer in vivo. K(+) is required as a cofactor. As to expression, ubiquitously expressed.

It is found in the mitochondrion. Its subcellular location is the cytoplasm. It carries out the reaction GTP + H2O = GDP + phosphate + H(+). Its function is as follows. GTPase component of the GTPBP3-MTO1 complex that catalyzes the 5-taurinomethyluridine (taum(5)U) modification at the 34th wobble position (U34) of mitochondrial tRNAs (mt-tRNAs), which plays a role in mt-tRNA decoding and mitochondrial translation. Taum(5)U formation on mammalian mt-tRNA requires the presence of both GTPBP3-mediated GTPase activity and MTO1 catalytic activity. The protein is 5-taurinomethyluridine-[tRNA] synthase subunit GTPB3, mitochondrial of Homo sapiens (Human).